We begin with the raw amino-acid sequence, 268 residues long: Nuclear protein UL4 homolog (268 aa).

Belongs to the alphaherpesvirinae HHV-1 UL4 family.

Its subcellular location is the host nucleus. The sequence is that of Nuclear protein UL4 homolog (MDV016) from Gallid herpesvirus 2 (strain Chicken/Md5/ATCC VR-987) (GaHV-2).